The sequence spans 283 residues: uncharacterized protein (283 aa).

N-linked (GlcNAc...) asparagine glycosylation is present at Asn-15. The 67-residue stretch at Asn-15 to Gln-81 folds into the PQ-loop 1 domain. 6 consecutive transmembrane segments (helical) span residues Ser-19 to Ile-39, Glu-48 to Tyr-68, Ala-108 to Leu-128, Val-138 to Leu-158, Val-170 to Leu-190, and Gly-206 to Leu-226. Positions Ala-149 to Asp-204 constitute a PQ-loop 2 domain. N-linked (GlcNAc...) asparagine glycosylation is present at Asn-228.

The protein localises to the membrane. This is an uncharacterized protein from Schizosaccharomyces pombe (strain 972 / ATCC 24843) (Fission yeast).